A 153-amino-acid polypeptide reads, in one-letter code: Melatonin receptor type 1A X2.0 (153 aa).

Residues 1-12 lie on the Cytoplasmic side of the membrane; sequence HSSWYNRLFSNS. The chain crosses the membrane as a helical span at residues 13–33; the sequence is GTICYVGLVWVLALGAILPNL. Topologically, residues 34 to 57 are extracellular; the sequence is FVGSLRCDPRIFSCTFAQYVSSYY. Residues 58–78 form a helical membrane-spanning segment; the sequence is TIAVVIFHFFLPIGVVSYCYL. Over 79-112 the chain is Cytoplasmic; it reads RIWVLVLNIRHRVKPDRHLHHQTWPYNIHGFITM. A helical transmembrane segment spans residues 113-133; the sequence is FVVFVLFAVCWGPLNIIGLTV. At 134-145 the chain is on the extracellular side; it reads AIYPPLGDSIPQ. The helical transmembrane segment at 146-153 threads the bilayer; it reads WLFVASYF.

This sequence belongs to the G-protein coupled receptor 1 family.

The protein localises to the cell membrane. Functionally, high affinity receptor for melatonin. The activity of this receptor is mediated by pertussis toxin sensitive G proteins that inhibits adenylate cyclase activity. The polypeptide is Melatonin receptor type 1A X2.0 (Xenopus laevis (African clawed frog)).